The following is a 357-amino-acid chain: S-adenosyl-L-methionine:benzoic acid/salicylic acid carboxyl methyltransferase 3 (357 aa).

Residue Tyr-18 participates in S-adenosyl-L-homocysteine binding. A benzoate-binding site is contributed by Gln-25. The S-adenosyl-L-homocysteine site is built by Cys-59, Asn-64, Asp-96, Leu-97, Ser-135, and Phe-136. Position 157 (Trp-157) interacts with benzoate. Mg(2+)-binding residues include Asn-168, Asp-254, Phe-256, and Asn-257. Gln-260 is a benzoate binding site.

Belongs to the methyltransferase superfamily. Type-7 methyltransferase family.

The catalysed reaction is benzoate + S-adenosyl-L-methionine = methyl benzoate + S-adenosyl-L-homocysteine. It participates in aromatic compound metabolism. Converts benzoic acid into the volatile ester methyl benzoates. This scent, mostly produced in a rhythmical, diurnal manner, attracts the pollinators. In Petunia hybrida (Petunia), this protein is S-adenosyl-L-methionine:benzoic acid/salicylic acid carboxyl methyltransferase 3.